Consider the following 324-residue polypeptide: Lactonase drp35 (324 aa).

10 residues coordinate Ca(2+): Glu47, Ser109, Gly111, Asp129, Thr132, Tyr134, Asp137, Asn184, Asp235, and Ser236. The Proton donor role is filled by Asp235.

This sequence belongs to the SMP-30/CGR1 family. Ca(2+) is required as a cofactor.

The protein resides in the cytoplasm. In terms of biological role, exhibits lactonase activity. Acts in cells with perturbed membrane integrity and is possibly related to the membrane homeostasis. The polypeptide is Lactonase drp35 (drp35) (Staphylococcus aureus (strain bovine RF122 / ET3-1)).